We begin with the raw amino-acid sequence, 306 residues long: Protein translocase subunit SecF (306 aa).

6 consecutive transmembrane segments (helical) span residues 17–37 (AFAV…TKGI), 134–154 (GLGM…RFQW), 158–178 (LGAI…LSFF), 185–205 (TVLA…IVIF), 232–254 (LLRT…FFGG), and 268–288 (VMAG…WLNL).

This sequence belongs to the SecD/SecF family. SecF subfamily. Forms a complex with SecD. Part of the essential Sec protein translocation apparatus which comprises SecA, SecYEG and auxiliary proteins SecDF-YajC and YidC.

It is found in the cell inner membrane. In terms of biological role, part of the Sec protein translocase complex. Interacts with the SecYEG preprotein conducting channel. SecDF uses the proton motive force (PMF) to complete protein translocation after the ATP-dependent function of SecA. The chain is Protein translocase subunit SecF from Pseudomonas aeruginosa (strain ATCC 15692 / DSM 22644 / CIP 104116 / JCM 14847 / LMG 12228 / 1C / PRS 101 / PAO1).